A 557-amino-acid chain; its full sequence is Urocanate hydratase (557 aa).

Residues 1–20 are disordered; sequence MSNPRHNEREVRSPRGDELN. NAD(+) is bound by residues 52 to 53, Gln-130, 176 to 178, Glu-196, Arg-201, 242 to 243, 263 to 267, 273 to 274, and Tyr-322; these read GG, GMG, NA, QTSAH, and YL. Residue Cys-410 is part of the active site. Position 492 (Gly-492) interacts with NAD(+).

The protein belongs to the urocanase family. NAD(+) is required as a cofactor.

It is found in the cytoplasm. The catalysed reaction is 4-imidazolone-5-propanoate = trans-urocanate + H2O. It functions in the pathway amino-acid degradation; L-histidine degradation into L-glutamate; N-formimidoyl-L-glutamate from L-histidine: step 2/3. Its function is as follows. Catalyzes the conversion of urocanate to 4-imidazolone-5-propionate. The chain is Urocanate hydratase from Brucella canis (strain ATCC 23365 / NCTC 10854 / RM-666).